A 246-amino-acid chain; its full sequence is Aquaporin SIP1-1 (246 aa).

Transmembrane regions (helical) follow at residues 13-33 (AAVT…TAAV) and 45-65 (YALL…NLLC). The short motif at 74–76 (NPT) is the NPA 1 element. 3 consecutive transmembrane segments (helical) span residues 95-115 (FPLA…AMAI), 139-159 (GAAA…WIIV), and 166-186 (IVKT…GAAY). Residues 192 to 194 (NPA) carry the NPA 2 motif. A helical membrane pass occupies residues 214 to 234 (VYWICPFVGAVLAAWVFRAVF).

The protein belongs to the MIP/aquaporin (TC 1.A.8) family. SIP (TC 1.A.8.10) subfamily. As to expression, expressed in roots, leaves and anthers.

It localises to the membrane. Aquaporins facilitate the transport of water and small neutral solutes across cell membranes. The chain is Aquaporin SIP1-1 (SIP1-1) from Oryza sativa subsp. japonica (Rice).